A 323-amino-acid polypeptide reads, in one-letter code: Ribose-phosphate pyrophosphokinase 2 (323 aa).

ATP is bound by residues 43-45 (DGE) and 102-103 (RQ). Residues His136 and Asp177 each contribute to the Mg(2+) site. Residue Lys200 is part of the active site. D-ribose 5-phosphate is bound by residues Arg202, Asp226, and 230 to 234 (DTAGT).

This sequence belongs to the ribose-phosphate pyrophosphokinase family. Class I subfamily. Homohexamer. Requires Mg(2+) as cofactor.

It localises to the cytoplasm. The enzyme catalyses D-ribose 5-phosphate + ATP = 5-phospho-alpha-D-ribose 1-diphosphate + AMP + H(+). It participates in metabolic intermediate biosynthesis; 5-phospho-alpha-D-ribose 1-diphosphate biosynthesis; 5-phospho-alpha-D-ribose 1-diphosphate from D-ribose 5-phosphate (route I): step 1/1. Functionally, involved in the biosynthesis of the central metabolite phospho-alpha-D-ribosyl-1-pyrophosphate (PRPP) via the transfer of pyrophosphoryl group from ATP to 1-hydroxyl of ribose-5-phosphate (Rib-5-P). This is Ribose-phosphate pyrophosphokinase 2 from Enterococcus faecalis (strain ATCC 700802 / V583).